The sequence spans 258 residues: Imidazole glycerol phosphate synthase subunit HisF (258 aa).

Residues aspartate 11 and aspartate 130 contribute to the active site.

This sequence belongs to the HisA/HisF family. In terms of assembly, heterodimer of HisH and HisF.

It localises to the cytoplasm. It carries out the reaction 5-[(5-phospho-1-deoxy-D-ribulos-1-ylimino)methylamino]-1-(5-phospho-beta-D-ribosyl)imidazole-4-carboxamide + L-glutamine = D-erythro-1-(imidazol-4-yl)glycerol 3-phosphate + 5-amino-1-(5-phospho-beta-D-ribosyl)imidazole-4-carboxamide + L-glutamate + H(+). It functions in the pathway amino-acid biosynthesis; L-histidine biosynthesis; L-histidine from 5-phospho-alpha-D-ribose 1-diphosphate: step 5/9. Functionally, IGPS catalyzes the conversion of PRFAR and glutamine to IGP, AICAR and glutamate. The HisF subunit catalyzes the cyclization activity that produces IGP and AICAR from PRFAR using the ammonia provided by the HisH subunit. The polypeptide is Imidazole glycerol phosphate synthase subunit HisF (Escherichia coli O6:K15:H31 (strain 536 / UPEC)).